The sequence spans 346 residues: Probable RNA methyltransferase PA1839 (346 aa).

Residue Glu91 is the Proton acceptor of the active site. Residues 94 to 320 enclose the Radical SAM core domain; the sequence is LLPRGGLCVS…TKVRNSAGQD (227 aa). Cysteines 101 and 325 form a disulfide. Cys108, Cys112, and Cys115 together coordinate [4Fe-4S] cluster. Residues 153–154, Ser183, 206–208, and Asn282 each bind S-adenosyl-L-methionine; these read GE and SLH. The S-methylcysteine intermediate role is filled by Cys325.

Belongs to the radical SAM superfamily. RlmN family. The cofactor is [4Fe-4S] cluster.

Its subcellular location is the cytoplasm. This is Probable RNA methyltransferase PA1839 from Pseudomonas aeruginosa (strain ATCC 15692 / DSM 22644 / CIP 104116 / JCM 14847 / LMG 12228 / 1C / PRS 101 / PAO1).